Consider the following 295-residue polypeptide: Bifunctional protein FolD (295 aa).

Residues 166–168 (GRS), Ser-191, and Ile-232 contribute to the NADP(+) site.

The protein belongs to the tetrahydrofolate dehydrogenase/cyclohydrolase family. In terms of assembly, homodimer.

The enzyme catalyses (6R)-5,10-methylene-5,6,7,8-tetrahydrofolate + NADP(+) = (6R)-5,10-methenyltetrahydrofolate + NADPH. The catalysed reaction is (6R)-5,10-methenyltetrahydrofolate + H2O = (6R)-10-formyltetrahydrofolate + H(+). Its pathway is one-carbon metabolism; tetrahydrofolate interconversion. Its function is as follows. Catalyzes the oxidation of 5,10-methylenetetrahydrofolate to 5,10-methenyltetrahydrofolate and then the hydrolysis of 5,10-methenyltetrahydrofolate to 10-formyltetrahydrofolate. This Rhodopseudomonas palustris (strain BisA53) protein is Bifunctional protein FolD.